The sequence spans 256 residues: Thiazole synthase (256 aa).

Lys96 serves as the catalytic Schiff-base intermediate with DXP. 1-deoxy-D-xylulose 5-phosphate is bound by residues Gly157, 183–184 (AG), and 205–206 (NT).

The protein belongs to the ThiG family. As to quaternary structure, homotetramer. Forms heterodimers with either ThiH or ThiS.

It is found in the cytoplasm. The catalysed reaction is [ThiS sulfur-carrier protein]-C-terminal-Gly-aminoethanethioate + 2-iminoacetate + 1-deoxy-D-xylulose 5-phosphate = [ThiS sulfur-carrier protein]-C-terminal Gly-Gly + 2-[(2R,5Z)-2-carboxy-4-methylthiazol-5(2H)-ylidene]ethyl phosphate + 2 H2O + H(+). Its pathway is cofactor biosynthesis; thiamine diphosphate biosynthesis. Catalyzes the rearrangement of 1-deoxy-D-xylulose 5-phosphate (DXP) to produce the thiazole phosphate moiety of thiamine. Sulfur is provided by the thiocarboxylate moiety of the carrier protein ThiS. In vitro, sulfur can be provided by H(2)S. This chain is Thiazole synthase, found in Bacillus cereus (strain ATCC 10987 / NRS 248).